A 149-amino-acid chain; its full sequence is D-aminoacyl-tRNA deacylase (149 aa).

The Gly-cisPro motif, important for rejection of L-amino acids signature appears at 137–138; sequence GP.

The protein belongs to the DTD family. In terms of assembly, homodimer.

Its subcellular location is the cytoplasm. It catalyses the reaction glycyl-tRNA(Ala) + H2O = tRNA(Ala) + glycine + H(+). The catalysed reaction is a D-aminoacyl-tRNA + H2O = a tRNA + a D-alpha-amino acid + H(+). Its function is as follows. An aminoacyl-tRNA editing enzyme that deacylates mischarged D-aminoacyl-tRNAs. Also deacylates mischarged glycyl-tRNA(Ala), protecting cells against glycine mischarging by AlaRS. Acts via tRNA-based rather than protein-based catalysis; rejects L-amino acids rather than detecting D-amino acids in the active site. By recycling D-aminoacyl-tRNA to D-amino acids and free tRNA molecules, this enzyme counteracts the toxicity associated with the formation of D-aminoacyl-tRNA entities in vivo and helps enforce protein L-homochirality. This Caldicellulosiruptor saccharolyticus (strain ATCC 43494 / DSM 8903 / Tp8T 6331) protein is D-aminoacyl-tRNA deacylase.